Here is a 318-residue protein sequence, read N- to C-terminus: 2,4-dinitroanisole O-demethylase subunit beta (318 aa).

The protein belongs to the metallo-beta-lactamase superfamily. In terms of assembly, part of the complex DnhAB composed of the 2,4-dinitroanisole O-demethylase alpha (DnhA) and beta (DnhB) subunits.

The enzyme catalyses 2,4-dinitroanisole + H2O = 2,4-dinitrophenol + methanol + H(+). In terms of biological role, involved in the degradation of 2,4-dinitroanisole (DNAN), an insensitive munition ingredient used in explosive formulations as a replacement for 2,4,6-trinitrotoluene (TNT). Catalyzes the removal of the methyl group from 2,4-dinitroanisole (DNAN) to yield 2,4-dinitrophenol (2,4-DNP) and methanol. This Nocardioides sp. (strain JS1661) protein is 2,4-dinitroanisole O-demethylase subunit beta.